Here is a 512-residue protein sequence, read N- to C-terminus: ETS translocation variant 3 (512 aa).

The ETS DNA-binding region spans 35–116 (IQLWHFILEL…KGKRFTYKFN (82 aa)). Positions 138–196 (QSAPPVPTASSRFHFPPLDTHSPTSDVQPGRFSASSLTASGQESSNGTDRKAELSXLED) are disordered. Phosphoserine occurs at positions 139, 159, and 315. A compositionally biased stretch (polar residues) spans 158 to 184 (HSPTSDVQPGRFSASSLTASGQESSNG). Positions 341–512 (QFSIKLQPPP…QGLATAAADA (172 aa)) are disordered. Residues 380–406 (IKVEPASEKDAESLRQSAREKEEHTXE) show a composition bias toward basic and acidic residues. Residue lysine 381 forms a Glycyl lysine isopeptide (Lys-Gly) (interchain with G-Cter in SUMO2) linkage. Lysine 388 is modified (N6-acetyllysine; alternate). Lysine 388 is covalently cross-linked (Glycyl lysine isopeptide (Lys-Gly) (interchain with G-Cter in SUMO2); alternate). Over residues 443-452 (EPLEVTEDIE) the composition is skewed to acidic residues. Composition is skewed to basic and acidic residues over residues 453 to 468 (DRPG…KEDA) and 479 to 491 (RWND…ELSK).

The protein belongs to the ETS family.

The protein resides in the nucleus. Transcriptional repressor that contribute to growth arrest during terminal macrophage differentiation by repressing target genes involved in Ras-dependent proliferation. Represses MMP1 promoter activity. This Ateles geoffroyi (Black-handed spider monkey) protein is ETS translocation variant 3 (ETV3).